The sequence spans 1000 residues: Putative methyl-accepting chemotaxis protein sll0041 (1000 aa).

Residues 1–59 (MTQNPSSDRRPDTAQSVANGETLDGALFTGLTDTAAAQDESSETSASFATIDGEDKSEV) form a disordered region. GAF domains follow at residues 342–478 (EIQG…QTTL) and 509–650 (NSEQ…GLAL). Residues 671–722 (EKMQKRALELLMEVDPVSRGDLTIRAHVTEDEIGTIADSYNATIESLRRIVT) form the HAMP domain. One can recognise a Methyl-accepting transducer domain in the interval 727-963 (AASQFTETTD…SVTQTMALVA (237 aa)).

The protein belongs to the methyl-accepting chemotaxis (MCP) protein family.

In Synechocystis sp. (strain ATCC 27184 / PCC 6803 / Kazusa), this protein is Putative methyl-accepting chemotaxis protein sll0041.